A 38-amino-acid chain; its full sequence is Large ribosomal subunit protein bL36 (38 aa).

It belongs to the bacterial ribosomal protein bL36 family.

This chain is Large ribosomal subunit protein bL36, found in Bacteroides fragilis (strain ATCC 25285 / DSM 2151 / CCUG 4856 / JCM 11019 / LMG 10263 / NCTC 9343 / Onslow / VPI 2553 / EN-2).